Here is a 161-residue protein sequence, read N- to C-terminus: Putative pre-16S rRNA nuclease (161 aa).

The protein belongs to the YqgF nuclease family.

It is found in the cytoplasm. Its function is as follows. Could be a nuclease involved in processing of the 5'-end of pre-16S rRNA. The protein is Putative pre-16S rRNA nuclease of Rhodospirillum rubrum (strain ATCC 11170 / ATH 1.1.1 / DSM 467 / LMG 4362 / NCIMB 8255 / S1).